We begin with the raw amino-acid sequence, 131 residues long: Cyclin-dependent kinase 4 inhibitor B (131 aa).

4 ANK repeats span residues G6–R35, F39–C67, T72–V101, and W105–D131.

The protein belongs to the CDKN2 cyclin-dependent kinase inhibitor family. Heterodimer of CDKN2B with CDK4 or CDK6.

Interacts strongly with CDK4 and CDK6. Potent inhibitor. Potential effector of TGF-beta induced cell cycle arrest. The sequence is that of Cyclin-dependent kinase 4 inhibitor B (CDKN2B) from Bos taurus (Bovine).